The chain runs to 544 residues: Esterase-6 (544 aa).

The N-terminal stretch at 1-21 (MNYVGLGLIIVLSCLWLGSNA) is a signal peptide. Asparagine 42 is a glycosylation site (N-linked (GlcNAc...) asparagine). The cysteines at positions 86 and 105 are disulfide-linked. The active-site Acyl-ester intermediate is the serine 209. Residues cysteine 261 and cysteine 273 are joined by a disulfide bond. Asparagine 420 and asparagine 456 each carry an N-linked (GlcNAc...) asparagine glycan. Catalysis depends on histidine 466, which acts as the Charge relay system. Residue asparagine 506 is glycosylated (N-linked (GlcNAc...) asparagine). Cysteine 514 and cysteine 535 are oxidised to a cystine.

The protein belongs to the type-B carboxylesterase/lipase family. As to quaternary structure, monomer. Specifically expressed in the ejaculatory bulbs of male.

The protein localises to the secreted. The catalysed reaction is a carboxylic ester + H2O = an alcohol + a carboxylate + H(+). Its function is as follows. Transferred from the ejaculatory bulbs of males to the female genitals upon copulation, plays an important role in the reproductive biology. The protein is Esterase-6 (Est-6) of Drosophila melanogaster (Fruit fly).